Here is a 228-residue protein sequence, read N- to C-terminus: D-lyxose/D-mannose isomerase (228 aa).

4 residues coordinate Mn(2+): His103, His105, Glu110, and His171.

The protein belongs to the D-lyxose ketol-isomerase family. In terms of assembly, homodimer. The cofactor is Mn(2+).

The enzyme catalyses D-lyxose = D-xylulose. It carries out the reaction D-mannose = D-fructose. In terms of biological role, sugar isomerase that catalyzes the reversible isomerization of D-lyxose to D-xylulose, and D-mannose to D-fructose. Shows optimum activity using D-lyxose as substrate, but can also effectively catalyze the isomerization between D-fructose and D-mannose. Shows lower activity with L-gulose, D-talose and L-ribose. The protein is D-lyxose/D-mannose isomerase of Serratia proteamaculans.